The following is a 569-amino-acid chain: Sugar transporter STL1 (569 aa).

At 1-29 the chain is on the cytoplasmic side; it reads MKDLKLSNFKGKFISRTSHWGLTGKKLRY. Residues 30–50 form a helical membrane-spanning segment; the sequence is FITIASMTGFSLFGYDQGLMA. Residues 51–79 lie on the Extracellular side of the membrane; it reads SLITGKQFNYEFPATKENGDHDRHATVVQ. The chain crosses the membrane as a helical span at residues 80 to 100; that stretch reads GATTSCYELGCFAGSLFVMFC. Topologically, residues 101-107 are cytoplasmic; it reads GERIGRK. Residues 108–128 traverse the membrane as a helical segment; sequence PLILMGSVITIIGAVISTCAF. Position 129 (Arg129) is a topological domain, extracellular. Residues 130–150 traverse the membrane as a helical segment; it reads GYWALGQFIIGRVVTGVGTGL. The Cytoplasmic segment spans residues 151-168; the sequence is NTSTIPVWQSEMSKAENR. A helical transmembrane segment spans residues 169 to 189; the sequence is GLLVNLEGSTIAFGTMIAYWI. At 190-203 the chain is on the extracellular side; it reads DFGLSYTNSSVQWR. Residue Asn197 is glycosylated (N-linked (GlcNAc...) asparagine). A helical membrane pass occupies residues 204-224; it reads FPVSMQIVFALFLLAFMIKLP. Topologically, residues 225–291 are cytoplasmic; sequence ESPRWLISQS…SRGRSQNLQR (67 aa). Residues 292 to 312 traverse the membrane as a helical segment; it reads ALIAASTQFFQQFTGCNAAIY. Over 313–330 the chain is Extracellular; sequence YSTVLFNKTIKLDYRLSM. Asn319 carries N-linked (GlcNAc...) asparagine glycosylation. Residues 331 to 351 form a helical membrane-spanning segment; sequence IIGGVFATIYALSTIGSFFLI. At 352-358 the chain is on the cytoplasmic side; it reads EKLGRRK. A helical transmembrane segment spans residues 359–379; that stretch reads LFLLGATGQAVSFTITFACLV. Topologically, residues 380–389 are extracellular; sequence KENKENARGA. A helical transmembrane segment spans residues 390-410; that stretch reads AVGLFLFITFFGLSLLSLPWI. The Cytoplasmic portion of the chain corresponds to 411–426; it reads YPPEIASMKVRASTNA. A helical transmembrane segment spans residues 427–447; the sequence is FSTCTNWLCNFAVVMFTPIFI. Over 448–453 the chain is Extracellular; sequence GQSGWG. The chain crosses the membrane as a helical span at residues 454 to 474; that stretch reads CYLFFAVMNYLYIPVIFFFYP. Topologically, residues 475–569 are cytoplasmic; it reads ETAGRSLEEI…TVNDKANFEG (95 aa). Residues 524–533 show a composition bias toward acidic residues; that stretch reads DDEMEKEDFG. Residues 524-569 are disordered; the sequence is DDEMEKEDFGEDRVEDTYNQINGDNSSSSSNIKNEDTVNDKANFEG. The span at 556-569 shows a compositional bias: basic and acidic residues; sequence KNEDTVNDKANFEG.

This sequence belongs to the major facilitator superfamily. Sugar transporter (TC 2.A.1.1) family.

Its subcellular location is the membrane. The chain is Sugar transporter STL1 (STL1) from Saccharomyces cerevisiae (strain ATCC 204508 / S288c) (Baker's yeast).